The sequence spans 1250 residues: Protein SSD1 (1250 aa).

Polar residues predominate over residues 1–22 (MSKNSNVNNNRSQEPNNMFVQT). The interval 1–32 (MSKNSNVNNNRSQEPNNMFVQTTGGGKNAPKQ) is disordered. Ser2 is modified (N-acetylserine). Residue Ser40 is modified to Phosphoserine. The segment at 79–163 (TGQYLSGNSG…SSIYGHSRRH (85 aa)) is disordered. Residues 84-94 (SGNSGSNNHFT) show a composition bias toward polar residues. Over residues 124–145 (NNSGYYHNSYDNNNNSNNPGSN) the composition is skewed to low complexity. Phosphoserine is present on residues Ser164 and Ser183. The segment covering 197–208 (QADSGSNSTTEQ) has biased composition (polar residues). Disordered stretches follow at residues 197-338 (QADS…GGRK), 418-443 (KEKE…SSDD), and 455-517 (SNNF…DDVE). Thr227 bears the Phosphothreonine mark. The span at 264-276 (NEYSPGINSNWRN) shows a compositional bias: polar residues. Residues 277-287 (QSQQPQQQLSP) show a composition bias toward low complexity. Phosphoserine occurs at positions 286 and 322. The span at 319–329 (SNSSVHSFSSQ) shows a compositional bias: polar residues. Residues 481–495 (STINNDSDSLSSPTK) show a composition bias toward polar residues. Phosphoserine is present on residues Ser491 and Ser492. The span at 497-510 (GVRRRSSLKQRPTQ) shows a compositional bias: basic residues. One can recognise a CSD2 domain in the interval 582–657 (AWFKPTDKKV…EIDSILRDNN (76 aa)). The residue at position 688 (Tyr688) is a Phosphotyrosine. Residues 694–1015 (DTNEYNIFAI…VHRQLKAVIH (322 aa)) form the RNB domain. One can recognise a DIS3L2 C-terminal domain in the interval 1064–1148 (GQLLTMATVL…SIKNKFRSTA (85 aa)).

It belongs to the RNR ribonuclease family.

Functionally, can suppress the lethality due to deletion of SIT4, and partially the defects due to BCY1 disruption. Is implicated in the control of the cell cycle G1 phase. This chain is Protein SSD1 (SSD1), found in Saccharomyces cerevisiae (strain ATCC 204508 / S288c) (Baker's yeast).